Here is a 282-residue protein sequence, read N- to C-terminus: Bis(5'-nucleosyl)-tetraphosphatase, symmetrical (282 aa).

It belongs to the Ap4A hydrolase family.

It carries out the reaction P(1),P(4)-bis(5'-adenosyl) tetraphosphate + H2O = 2 ADP + 2 H(+). Hydrolyzes diadenosine 5',5'''-P1,P4-tetraphosphate to yield ADP. In Salmonella paratyphi C (strain RKS4594), this protein is Bis(5'-nucleosyl)-tetraphosphatase, symmetrical.